Reading from the N-terminus, the 399-residue chain is Tryptophan synthase beta chain (399 aa).

An N6-(pyridoxal phosphate)lysine modification is found at Lys92.

The protein belongs to the TrpB family. In terms of assembly, tetramer of two alpha and two beta chains. Pyridoxal 5'-phosphate serves as cofactor.

It carries out the reaction (1S,2R)-1-C-(indol-3-yl)glycerol 3-phosphate + L-serine = D-glyceraldehyde 3-phosphate + L-tryptophan + H2O. It functions in the pathway amino-acid biosynthesis; L-tryptophan biosynthesis; L-tryptophan from chorismate: step 5/5. Functionally, the beta subunit is responsible for the synthesis of L-tryptophan from indole and L-serine. The polypeptide is Tryptophan synthase beta chain (Nitrosomonas eutropha (strain DSM 101675 / C91 / Nm57)).